The sequence spans 410 residues: Phosphoserine phosphatase (410 aa).

Positions 13–91 constitute an ACT domain; it reads LVKIFGKDRP…QAEIISGIGD (79 aa). Residue Asp-187 is the Nucleophile of the active site. Asp-187 and Asp-189 together coordinate Mg(2+). Catalysis depends on Asp-189, which acts as the Proton donor. Substrate is bound by residues Glu-196, Arg-232, 275 to 276, and Lys-320; that span reads SG. Residue Asp-343 participates in Mg(2+) binding. Asn-346 provides a ligand contact to substrate.

Belongs to the HAD-like hydrolase superfamily. SerB family. Mg(2+) serves as cofactor.

It catalyses the reaction O-phospho-L-serine + H2O = L-serine + phosphate. It carries out the reaction O-phospho-D-serine + H2O = D-serine + phosphate. It functions in the pathway amino-acid biosynthesis; L-serine biosynthesis; L-serine from 3-phospho-D-glycerate: step 3/3. Functionally, catalyzes the dephosphorylation of phosphoserine (P-Ser) in vitro. Also catalyzes the dephosphorylation of phosphothreonine (P-Thr) in vitro. The chain is Phosphoserine phosphatase from Streptomyces coelicolor (strain ATCC BAA-471 / A3(2) / M145).